We begin with the raw amino-acid sequence, 72 residues long: Alpha-mammal toxin Bot3 (72 aa).

The first 8 residues, 1–8, serve as a signal peptide directing secretion; it reads LVMAGVES. Residues 10 to 72 form the LCN-type CS-alpha/beta domain; sequence KDGYIVDDRN…VRTKGPGRCN (63 aa). 4 cysteine pairs are disulfide-bonded: C20/C71, C24/C44, C30/C54, and C34/C56. N72 carries the post-translational modification Asparagine amide.

This sequence belongs to the long (4 C-C) scorpion toxin superfamily. Sodium channel inhibitor family. Alpha subfamily. When the toxin is not amidated, there are 75% loss of toxicity to mice, and total incapacity to bind rat brain synaptosomes. As to expression, expressed by the venom gland.

Its subcellular location is the secreted. In terms of biological role, alpha toxins bind voltage-independently at site-3 of sodium channels (Nav) and inhibit the inactivation of the activated channels, thereby blocking neuronal transmission. Is active against mammals and binds with high affinity to rat brain synaptosomes. The chain is Alpha-mammal toxin Bot3 from Buthus occitanus tunetanus (Common European scorpion).